Consider the following 90-residue polypeptide: Small ribosomal subunit protein uS19 (90 aa).

Belongs to the universal ribosomal protein uS19 family.

Functionally, protein S19 forms a complex with S13 that binds strongly to the 16S ribosomal RNA. This is Small ribosomal subunit protein uS19 from Methylococcus capsulatus (strain ATCC 33009 / NCIMB 11132 / Bath).